The chain runs to 505 residues: ATP synthase subunit alpha, chloroplastic (505 aa).

Position 170 to 177 (170 to 177) interacts with ATP; that stretch reads GDRQTGKT.

The protein belongs to the ATPase alpha/beta chains family. F-type ATPases have 2 components, CF(1) - the catalytic core - and CF(0) - the membrane proton channel. CF(1) has five subunits: alpha(3), beta(3), gamma(1), delta(1), epsilon(1). CF(0) has four main subunits: a, b, b' and c.

It is found in the plastid. The protein localises to the chloroplast thylakoid membrane. The catalysed reaction is ATP + H2O + 4 H(+)(in) = ADP + phosphate + 5 H(+)(out). Produces ATP from ADP in the presence of a proton gradient across the membrane. The alpha chain is a regulatory subunit. This chain is ATP synthase subunit alpha, chloroplastic, found in Zygnema circumcarinatum (Green alga).